A 600-amino-acid polypeptide reads, in one-letter code: Cationic amino acid transporter 4, vacuolar (600 aa).

Residues 1-32 (MNSLVRRKQVDSVHLIKNDGPHQLAKKLSAVD) lie on the Cytoplasmic side of the membrane. The helical transmembrane segment at 33-53 (LVAIGVGTTIGAGVYILVGTV) threads the bilayer. Residues 54 to 60 (AREHTGP) are Vacuolar-facing. The helical transmembrane segment at 61–81 (ALAVSFFIAGVAAALSACCYA) threads the bilayer. At 82 to 92 (ELASRCPSAGS) the chain is on the cytoplasmic side. The chain crosses the membrane as a helical span at residues 93 to 115 (AYHYAYICLGEGIAWLVGWALVL). Topologically, residues 116-152 (DYTIGGSAIARGITPNLASFFGGLDNLPVFLARQTIP) are vacuolar. The helical transmembrane segment at 153–173 (GVGIVVDPCAALLIMIVTILL) threads the bilayer. At 174 to 184 (CFGIKESSTVQ) the chain is on the cytoplasmic side. A helical transmembrane segment spans residues 185-205 (AIVTSVNVCTLVFIIVVGGYL). Topologically, residues 206-220 (ACKTGWVGYDLPSGY) are vacuolar. The helical transmembrane segment at 221 to 241 (FPFGLNGILAGSAVVFFSYIG) threads the bilayer. The Cytoplasmic segment spans residues 242-264 (FDTVTSTAEEVKNPQRDLPLGIG). Residues 265-285 (IALLICCILYMLLSVVIVGLV) form a helical membrane-spanning segment. Residues 286–308 (PYYSLNPDTPISSAFGDSGMQWA) are Vacuolar-facing. A helical transmembrane segment spans residues 309-329 (AYILTTGAITALCASLLGSLL). At 330–360 (AQPRIFMAMARDGLLPAFFSEISPRTQVPVK) the chain is on the cytoplasmic side. The chain crosses the membrane as a helical span at residues 361–381 (STIAIGVLAAALAFFMDVAQL). A topological domain (vacuolar) is located at residue Ser-382. The helical transmembrane segment at 383–403 (EMVSVGTLMAFTAVAVCVLVL) threads the bilayer. The Cytoplasmic portion of the chain corresponds to 404-462 (RYVPPDGVPLSSSSQTLSDTDESRAETENFLVDAIESSDSPLLGNETARDEKYFGKRRK). Residues 463-483 (IAAWSIALVCIGVLGLASAAS) form a helical membrane-spanning segment. The Vacuolar portion of the chain corresponds to 484–492 (AERLPSFPR). The chain crosses the membrane as a helical span at residues 493 to 513 (FTICGVSAVILLGSLITLGYI). At 514-528 (DEDEERHNFGHKGGF) the chain is on the cytoplasmic side. Residues 529–549 (LCPFVPYLPVLCILINTYLII) form a helical membrane-spanning segment. A topological domain (vacuolar) is located at residue Asn-550. Residues 551 to 571 (IGAGTWIRVLIWLLIGSMIYI) form a helical membrane-spanning segment. Topologically, residues 572–600 (FYGRSHSLLNNAVYVPTMTCTRKTTDHLA) are cytoplasmic.

The protein belongs to the amino acid-polyamine-organocation (APC) superfamily. Cationic amino acid transporter (CAT) (TC 2.A.3.3) family. As to expression, expressed in roots, stems, flowers, and leaves.

Its subcellular location is the vacuole membrane. Its function is as follows. Permease involved in the transport of the cationic amino acids. The chain is Cationic amino acid transporter 4, vacuolar (CAT4) from Arabidopsis thaliana (Mouse-ear cress).